The following is a 156-amino-acid chain: Small ribosomal subunit protein uS7 (156 aa).

This sequence belongs to the universal ribosomal protein uS7 family. In terms of assembly, part of the 30S ribosomal subunit. Contacts proteins S9 and S11.

Functionally, one of the primary rRNA binding proteins, it binds directly to 16S rRNA where it nucleates assembly of the head domain of the 30S subunit. Is located at the subunit interface close to the decoding center, probably blocks exit of the E-site tRNA. This chain is Small ribosomal subunit protein uS7, found in Desulfovibrio desulfuricans (strain ATCC 27774 / DSM 6949 / MB).